A 402-amino-acid polypeptide reads, in one-letter code: MSSQRPPRPLDDVRVLELGAFLAGPFCGQLLADFGAEVIKVEPPGKGDPMREWGRHRYKGRTLWWPVLARNKKSITIDLRTPEGQALVKRLVPHVDMVLENFRPGTLEEWGLGWEELHALNPGLIMIRVSGFGQTGPYRDKAGFGSIGEAMGGIRAITGFPDRPPTRIGISIGDSLAATFAALGALVALHQRQRSGQGQVVDIGIYEGVLALMESMIPEYQLTGHIRERTGNILPNVAPSNIYPTADGSWFVIGANADTIFTRLAQAMGQPELATDPRFATHQARGEHQAELDDLIAAWTLNYTADQLQVMMDEYGVPAGRIYTAKEMLSDPHFIARQSIIGVHDPDLGEIKMQNVVPRLSATPGGVDWTGPALGQHNREIFTDLLGLTEDDLAMLQAKRVI.

Asp174 functions as the Nucleophile in the catalytic mechanism.

Belongs to the CoA-transferase III family. As to quaternary structure, homodimer.

The catalysed reaction is (3R)-citramalate + succinyl-CoA = (3R)-citramalyl-CoA + succinate. The enzyme catalyses (R)-malate + succinyl-CoA = (R)-malyl-CoA + succinate. In terms of biological role, involved in the 3-hydroxypropionate cycle used for autotrophic carbon dioxide fixation, and in the glyoxylate assimilation cycle used to regenerate acetyl-CoA and produce pyruvate as universal precursor for biosynthesis. Catalyzes the transfer of CoA moiety from succinyl-CoA to D-citramalate to yield citramalyl-CoA. The sequence is that of Succinyl-CoA--D-citramalate CoA-transferase from Chloroflexus aurantiacus (strain ATCC 29366 / DSM 635 / J-10-fl).